The chain runs to 372 residues: MNLSSLPFRLLAAAVALCAIAAPASAERIKDLAQVGGVRGNALVGYGLVVGLDGSGDRTSQAPFTVQSLKNLLGELGVNVPANVNPQLKNVAAVAIHAELPPFAKPGQPIDITVSSIANAVSLRGGSLLMAPLKGADGQVYAMAQGNLVVGGFGAQGKDGSRVSVNIPSVGRIPNGATVERALPDVFAGSGEITLNLHQNDFTTVSRMVAAIDNSFGAGTARAVDGVTVSVRSPTDPSARIGLLARLENVELSPGDAPAKVVVNARTGTVVIGQLVRVMPAAIAHGSLTVTISENTNVSQPGAFSGGRTAVTPQSTIKATSEGSRMFKFEGGTTLDQIVRAVNEVGAAPGDLVAILEALKQAGALTAELEVI.

The first 26 residues, 1–26, serve as a signal peptide directing secretion; that stretch reads MNLSSLPFRLLAAAVALCAIAAPASA.

It belongs to the FlgI family. In terms of assembly, the basal body constitutes a major portion of the flagellar organelle and consists of four rings (L,P,S, and M) mounted on a central rod.

Its subcellular location is the periplasm. It is found in the bacterial flagellum basal body. Assembles around the rod to form the L-ring and probably protects the motor/basal body from shearing forces during rotation. The polypeptide is Flagellar P-ring protein (Xanthomonas campestris pv. campestris (strain B100)).